A 180-amino-acid polypeptide reads, in one-letter code: Ribulose bisphosphate carboxylase small subunit, chloroplastic (180 aa).

A chloroplast-targeting transit peptide spans 1–57 (MASVVASAAVVTPFAASAASTTKSSQIVSVQAGLKAGVFGGKSEWQTKTQTNGSRVS).

This sequence belongs to the RuBisCO small chain family. As to quaternary structure, heterohexadecamer of 8 large and 8 small subunits.

Its subcellular location is the plastid. The protein resides in the chloroplast. Functionally, ruBisCO catalyzes two reactions: the carboxylation of D-ribulose 1,5-bisphosphate, the primary event in carbon dioxide fixation, as well as the oxidative fragmentation of the pentose substrate. Both reactions occur simultaneously and in competition at the same active site. Although the small subunit is not catalytic it is essential for maximal activity. This is Ribulose bisphosphate carboxylase small subunit, chloroplastic from Marchantia paleacea (Liverwort).